Consider the following 327-residue polypeptide: tRNA uridine(34) hydroxylase (327 aa).

The Rhodanese domain maps to 123-217 (SDPEVLLVDT…YLEEVKQEES (95 aa)). C177 functions as the Cysteine persulfide intermediate in the catalytic mechanism.

It belongs to the TrhO family.

The catalysed reaction is uridine(34) in tRNA + AH2 + O2 = 5-hydroxyuridine(34) in tRNA + A + H2O. Functionally, catalyzes oxygen-dependent 5-hydroxyuridine (ho5U) modification at position 34 in tRNAs. The chain is tRNA uridine(34) hydroxylase from Shewanella piezotolerans (strain WP3 / JCM 13877).